The following is an 880-amino-acid chain: Translation initiation factor IF-2 (880 aa).

Residues K259–T281 form a disordered region. A tr-type G domain is found at S379 to K548. A G1 region spans residues G388–T395. A GTP-binding site is contributed by G388–T395. The G2 stretch occupies residues G413 to H417. The segment at D434–G437 is G3. GTP is bound by residues D434–H438 and N488–D491. Residues N488–D491 form a G4 region. The tract at residues S524–K526 is G5.

This sequence belongs to the TRAFAC class translation factor GTPase superfamily. Classic translation factor GTPase family. IF-2 subfamily.

The protein resides in the cytoplasm. Its function is as follows. One of the essential components for the initiation of protein synthesis. Protects formylmethionyl-tRNA from spontaneous hydrolysis and promotes its binding to the 30S ribosomal subunits. Also involved in the hydrolysis of GTP during the formation of the 70S ribosomal complex. The chain is Translation initiation factor IF-2 from Baumannia cicadellinicola subsp. Homalodisca coagulata.